Consider the following 293-residue polypeptide: Acetyl-coenzyme A carboxylase carboxyl transferase subunit beta (293 aa).

A CoA carboxyltransferase N-terminal domain is found at 29–293 (LWVKCSECSQ…GVKELAEANI (265 aa)). Positions 33, 36, 52, and 55 each coordinate Zn(2+). A C4-type zinc finger spans residues 33 to 55 (CSECSQVAYRKDLISNFNVCSNC).

Belongs to the AccD/PCCB family. As to quaternary structure, acetyl-CoA carboxylase is a heterohexamer composed of biotin carboxyl carrier protein (AccB), biotin carboxylase (AccC) and two subunits each of ACCase subunit alpha (AccA) and ACCase subunit beta (AccD). Zn(2+) serves as cofactor.

It is found in the cytoplasm. The catalysed reaction is N(6)-carboxybiotinyl-L-lysyl-[protein] + acetyl-CoA = N(6)-biotinyl-L-lysyl-[protein] + malonyl-CoA. Its pathway is lipid metabolism; malonyl-CoA biosynthesis; malonyl-CoA from acetyl-CoA: step 1/1. Component of the acetyl coenzyme A carboxylase (ACC) complex. Biotin carboxylase (BC) catalyzes the carboxylation of biotin on its carrier protein (BCCP) and then the CO(2) group is transferred by the transcarboxylase to acetyl-CoA to form malonyl-CoA. The chain is Acetyl-coenzyme A carboxylase carboxyl transferase subunit beta from Prochlorococcus marinus (strain MIT 9312).